Consider the following 159-residue polypeptide: UPF0336 protein ML1910 (159 aa).

Belongs to the UPF0336 family.

This Mycobacterium leprae (strain TN) protein is UPF0336 protein ML1910.